Consider the following 187-residue polypeptide: Elongation factor P (187 aa).

This sequence belongs to the elongation factor P family.

Its subcellular location is the cytoplasm. It functions in the pathway protein biosynthesis; polypeptide chain elongation. In terms of biological role, involved in peptide bond synthesis. Stimulates efficient translation and peptide-bond synthesis on native or reconstituted 70S ribosomes in vitro. Probably functions indirectly by altering the affinity of the ribosome for aminoacyl-tRNA, thus increasing their reactivity as acceptors for peptidyl transferase. This chain is Elongation factor P, found in Helicobacter pylori (strain G27).